Consider the following 94-residue polypeptide: Transcription factor CPC (94 aa).

The segment at 1 to 10 (MFRSDKAEKM) is S1, required for cell-to-cell movements. Residues 1 to 11 (MFRSDKAEKMD) show a composition bias toward basic and acidic residues. Residues 1-25 (MFRSDKAEKMDKRRRRQSKAKASCS) form a disordered region. A Myb-like domain is found at 30 to 80 (SIEWEAVKMSEEEEDLISRMYKLVGDRWELIAGRIPGRTPEEIERYWLMKH). The segment at 76-79 (WLMK) is S2, required for cell-to-cell movements and nuclear localization.

In terms of assembly, interacts with GL3 and BHLH2. Interacts with SIEL. In terms of tissue distribution, expressed in trichomes and in young developing leaves, as well as in root hair and stele cells (pericycle and vascular tissues). Expressed in epidermal root hairless cells (atrichoblasts) and moves to root hair cells (trichoblasts) by a cell-to-cell movement through plasmodesmata (at protein level).

Its subcellular location is the nucleus. Transcription factor. Determines the fate of epidermal cell differentiation. Represses trichome development by lateral inhibition. Together with GL3 or BHLH2, promotes the formation of hair developing cells (H position) in root epidermis, probably by inhibiting non-hair cell formation. Represses the expression of GL2 and WER in H cells. Positively regulates stomatal formation in the hypocotyl. This chain is Transcription factor CPC (CPC), found in Arabidopsis thaliana (Mouse-ear cress).